The primary structure comprises 518 residues: Glutamate--cysteine ligase (518 aa).

Belongs to the glutamate--cysteine ligase type 1 family. Type 1 subfamily.

The enzyme catalyses L-cysteine + L-glutamate + ATP = gamma-L-glutamyl-L-cysteine + ADP + phosphate + H(+). The protein operates within sulfur metabolism; glutathione biosynthesis; glutathione from L-cysteine and L-glutamate: step 1/2. The sequence is that of Glutamate--cysteine ligase from Escherichia coli O7:K1 (strain IAI39 / ExPEC).